Here is a 185-residue protein sequence, read N- to C-terminus: MESPMHLPEVIAVQQESQQMGLSVTAPELHGSLSGLLAGGGGNGPDWLAMILADAEVAAPPKGSVLERLYQATASQLEDPDFAFQLLLADDGATLAARADALFEWCRAFLGGFGLAAHSRSVLSAEGDEILRDLAKLAQASVDDFDMNEEEEDGSLEEIEEFVRVAVLLLHGDCLIGPCAPQPLN.

It belongs to the UPF0149 family.

The sequence is that of UPF0149 protein XF_2010 from Xylella fastidiosa (strain 9a5c).